The following is a 585-amino-acid chain: Glutamate decarboxylase 2 (585 aa).

Positions M1 to E14 are enriched in low complexity. The tract at residues M1–G24 is disordered. S3, S6, S10, and S13 each carry phosphoserine. S-palmitoyl cysteine attachment occurs at residues C30 and C45. Q181–S183 is a binding site for substrate. The residue at position 396 (K396) is an N6-(pyridoxal phosphate)lysine. A substrate-binding site is contributed by R558.

It belongs to the group II decarboxylase family. Homodimer. Requires pyridoxal 5'-phosphate as cofactor. Post-translationally, phosphorylated; which does not affect kinetic parameters or subcellular location. In terms of processing, palmitoylated; which is required for presynaptic clustering.

The protein localises to the cytoplasm. It localises to the cytosol. Its subcellular location is the cytoplasmic vesicle. The protein resides in the presynaptic cell membrane. It is found in the golgi apparatus membrane. It carries out the reaction L-glutamate + H(+) = 4-aminobutanoate + CO2. Its function is as follows. Catalyzes the production of GABA. The sequence is that of Glutamate decarboxylase 2 from Homo sapiens (Human).